Reading from the N-terminus, the 159-residue chain is RNA pyrophosphohydrolase (159 aa).

The region spanning 6 to 149 (GFRPNVGIIL…KREVYRRALK (144 aa)) is the Nudix hydrolase domain. Residues 38–59 (GGINPDETPEDALYRELNEEVG) carry the Nudix box motif.

This sequence belongs to the Nudix hydrolase family. RppH subfamily. The cofactor is a divalent metal cation.

Its function is as follows. Accelerates the degradation of transcripts by removing pyrophosphate from the 5'-end of triphosphorylated RNA, leading to a more labile monophosphorylated state that can stimulate subsequent ribonuclease cleavage. In Pseudomonas entomophila (strain L48), this protein is RNA pyrophosphohydrolase.